The primary structure comprises 271 residues: Cell division protein FtsQ (271 aa).

The segment at 1–37 (MAAGPTTAEKSGASGAKRSSKGSSDGPSRPGTRNRKF) is disordered. The Cytoplasmic portion of the chain corresponds to 1 to 43 (MAAGPTTAEKSGASGAKRSSKGSSDGPSRPGTRNRKFRMPGTR). Positions 8–24 (AEKSGASGAKRSSKGSS) are enriched in low complexity. A helical transmembrane segment spans residues 44 to 64 (ALLITLGVLLLVAGGLWALYG). The Extracellular portion of the chain corresponds to 65-271 (STWFRVERVK…APTAPASSGS (207 aa)). One can recognise a POTRA domain in the interval 68–137 (FRVERVKTSG…HGIGLKVTER (70 aa)).

This sequence belongs to the FtsQ/DivIB family. FtsQ subfamily.

It localises to the cell membrane. In terms of biological role, essential cell division protein. The polypeptide is Cell division protein FtsQ (Streptomyces venezuelae (strain ATCC 10712 / CBS 650.69 / DSM 40230 / JCM 4526 / NBRC 13096 / PD 04745)).